The sequence spans 168 residues: Competence protein B (168 aa).

In terms of biological role, involved in transformation (genetic competence for DNA uptake). The sequence is that of Competence protein B (comB) from Haemophilus influenzae (strain ATCC 51907 / DSM 11121 / KW20 / Rd).